Here is a 448-residue protein sequence, read N- to C-terminus: Probable rhamnogalacturonase E (448 aa).

The first 22 residues, 1 to 22 (MTWSTSFLVATSLLSIINSVHA), serve as a signal peptide directing secretion. Residues C43 and C69 are joined by a disulfide bond. N-linked (GlcNAc...) asparagine glycans are attached at residues N54, N92, and N131. D221 functions as the Proton donor in the catalytic mechanism. C223 and C240 are oxidised to a cystine. N256 and N284 each carry an N-linked (GlcNAc...) asparagine glycan. H296 is a catalytic residue. N-linked (GlcNAc...) asparagine glycosylation is found at N323 and N328. 2 disulfides stabilise this stretch: C346-C352 and C374-C382.

The protein belongs to the glycosyl hydrolase 28 family.

It localises to the secreted. Pectinolytic enzymes consist of four classes of enzymes: pectine lyase, polygalacturonase, pectin methylesterase and rhamnogalacturonase. Hydrolyzes alpha-D-galacturonopyranosyl-(1,2)-alpha-L-rhamnopyranosyl linkages in the backbone of the hairy regions of pectins. This chain is Probable rhamnogalacturonase E (rhgE), found in Aspergillus niger (strain ATCC MYA-4892 / CBS 513.88 / FGSC A1513).